A 430-amino-acid polypeptide reads, in one-letter code: Enolase (430 aa).

Gln167 lines the (2R)-2-phosphoglycerate pocket. The active-site Proton donor is the Glu209. Asp246, Glu289, and Asp316 together coordinate Mg(2+). Residues Lys341, Arg370, Ser371, and Lys392 each coordinate (2R)-2-phosphoglycerate. Lys341 functions as the Proton acceptor in the catalytic mechanism.

The protein belongs to the enolase family. Component of the RNA degradosome, a multiprotein complex involved in RNA processing and mRNA degradation. Mg(2+) is required as a cofactor.

The protein resides in the cytoplasm. It localises to the secreted. It is found in the cell surface. The enzyme catalyses (2R)-2-phosphoglycerate = phosphoenolpyruvate + H2O. The protein operates within carbohydrate degradation; glycolysis; pyruvate from D-glyceraldehyde 3-phosphate: step 4/5. Functionally, catalyzes the reversible conversion of 2-phosphoglycerate (2-PG) into phosphoenolpyruvate (PEP). It is essential for the degradation of carbohydrates via glycolysis. This is Enolase from Alcanivorax borkumensis (strain ATCC 700651 / DSM 11573 / NCIMB 13689 / SK2).